The following is a 328-amino-acid chain: dTDP-4-dehydrorhamnose 3,5-epimerase (328 aa).

Substrate-binding positions include arginine 23, glutamate 28, 46 to 48 (QEN), and arginine 58. The active-site Proton acceptor is histidine 61. Substrate-binding residues include lysine 70 and histidine 117. Tyrosine 130 serves as the catalytic Proton donor. Substrate contacts are provided by glutamate 141 and lysine 166.

Belongs to the dTDP-4-dehydrorhamnose 3,5-epimerase family. Homodimer.

The catalysed reaction is dTDP-4-dehydro-6-deoxy-alpha-D-glucose = dTDP-4-dehydro-beta-L-rhamnose. It functions in the pathway carbohydrate biosynthesis; dTDP-L-rhamnose biosynthesis. The protein operates within bacterial outer membrane biogenesis; LPS O-antigen biosynthesis. Catalyzes the epimerization of the C3' and C5'positions of dTDP-6-deoxy-D-xylo-4-hexulose, forming dTDP-6-deoxy-L-lyxo-4-hexulose. The polypeptide is dTDP-4-dehydrorhamnose 3,5-epimerase (rfbC) (Neisseria gonorrhoeae).